Here is a 427-residue protein sequence, read N- to C-terminus: MTEAMKITLSTQPADARWGDKATYSINNDGITLHLNGKDDLGLIQRAARKIDGLGIKQVALTGEGWDIERCWAFWAGYKGPKGVRTVMWPDLDDAQRQELDNRLTIIDWVRDTINAPAEELGPEQLAQRAVDLLCSVACDSVTYRITKGEDLREQNYMGLHTVGRGSERPPVLLALDYNPTGDKDAPVYACLVGKGITFDSGGYSIKQSAFMDSMKSDMGGAATVTGALAFAITRGLNKRVKLFLCCADNLISGNAFKLGDIIRYRNGKNVEVMNTDAEGRLVLADGLIDASAQHPELIIDMATLTGAAKTALGNDYHALFSFDDTLAGRLLTSAAQENEPFWRLPLAEFHRNQLPSNFAELNNTGSAAYPAGASTAAGFLSHFVENYREGWLHIDCSATYRKAPVEQWAAGATGLGVRTIANLLTA.

Mn(2+) is bound by residues lysine 195 and aspartate 200. Residue lysine 207 is part of the active site. 3 residues coordinate Mn(2+): aspartate 218, aspartate 277, and glutamate 279. Arginine 281 is a catalytic residue.

The protein belongs to the peptidase M17 family. Homohexamer. Mn(2+) is required as a cofactor.

It localises to the cytoplasm. The enzyme catalyses Release of an N-terminal amino acid, Xaa, from a peptide or arylamide. Xaa is preferably Glu or Asp but may be other amino acids, including Leu, Met, His, Cys and Gln.. Its function is as follows. Probably plays an important role in intracellular peptide degradation. The chain is Peptidase B from Salmonella dublin (strain CT_02021853).